The chain runs to 144 residues: Apidaecins type 22 (144 aa).

The N-terminal stretch at 1-19 is a signal peptide; the sequence is MKNFALAILVVTFVVAVFG. Propeptides lie at residues 20–42, 63–70, 91–98, and 119–126; these read NTNL…EAEP and EAEPEAEP. The interval 20–144 is disordered; it reads NTNLDPPTRP…PQPRPPHPRI (125 aa). Pro residues predominate over residues 134-144; that stretch reads IPQPRPPHPRI.

Belongs to the apidaecin family.

The protein localises to the secreted. In terms of biological role, apidaecins have bactericidal activity; predominantly against Gram-negative bacteria. They seem to interfere with cell propagation. The sequence is that of Apidaecins type 22 from Apis mellifera (Honeybee).